The following is a 205-amino-acid chain: Molybdenum cofactor guanylyltransferase (205 aa).

Residues 14 to 16 (LAG), K27, D77, and D107 contribute to the GTP site. D107 contributes to the Mg(2+) binding site.

The protein belongs to the MobA family. In terms of assembly, monomer. Mg(2+) serves as cofactor.

The protein localises to the cytoplasm. It catalyses the reaction Mo-molybdopterin + GTP + H(+) = Mo-molybdopterin guanine dinucleotide + diphosphate. In terms of biological role, transfers a GMP moiety from GTP to Mo-molybdopterin (Mo-MPT) cofactor (Moco or molybdenum cofactor) to form Mo-molybdopterin guanine dinucleotide (Mo-MGD) cofactor. This is Molybdenum cofactor guanylyltransferase from Burkholderia vietnamiensis (strain G4 / LMG 22486) (Burkholderia cepacia (strain R1808)).